We begin with the raw amino-acid sequence, 60 residues long: Large ribosomal subunit protein eL37 (60 aa).

Zn(2+) contacts are provided by cysteine 19, cysteine 22, cysteine 34, and cysteine 37. The C4-type zinc finger occupies 19–37 (CRRCGRISFHAQKKVCSSC).

This sequence belongs to the eukaryotic ribosomal protein eL37 family. Zn(2+) serves as cofactor.

Functionally, binds to the 23S rRNA. This chain is Large ribosomal subunit protein eL37, found in Methanoregula boonei (strain DSM 21154 / JCM 14090 / 6A8).